The sequence spans 558 residues: Dihydroxy-acid dehydratase (558 aa).

C50 is a [2Fe-2S] cluster binding site. D82 contacts Mg(2+). Residue C123 participates in [2Fe-2S] cluster binding. 2 residues coordinate Mg(2+): D124 and K125. K125 carries the post-translational modification N6-carboxylysine. A [2Fe-2S] cluster-binding site is contributed by C195. Residue E447 coordinates Mg(2+). S472 (proton acceptor) is an active-site residue.

Belongs to the IlvD/Edd family. As to quaternary structure, homodimer. [2Fe-2S] cluster serves as cofactor. Mg(2+) is required as a cofactor.

The enzyme catalyses (2R)-2,3-dihydroxy-3-methylbutanoate = 3-methyl-2-oxobutanoate + H2O. It catalyses the reaction (2R,3R)-2,3-dihydroxy-3-methylpentanoate = (S)-3-methyl-2-oxopentanoate + H2O. It functions in the pathway amino-acid biosynthesis; L-isoleucine biosynthesis; L-isoleucine from 2-oxobutanoate: step 3/4. Its pathway is amino-acid biosynthesis; L-valine biosynthesis; L-valine from pyruvate: step 3/4. In terms of biological role, functions in the biosynthesis of branched-chain amino acids. Catalyzes the dehydration of (2R,3R)-2,3-dihydroxy-3-methylpentanoate (2,3-dihydroxy-3-methylvalerate) into 2-oxo-3-methylpentanoate (2-oxo-3-methylvalerate) and of (2R)-2,3-dihydroxy-3-methylbutanoate (2,3-dihydroxyisovalerate) into 2-oxo-3-methylbutanoate (2-oxoisovalerate), the penultimate precursor to L-isoleucine and L-valine, respectively. In Saccharolobus islandicus (strain M.16.27) (Sulfolobus islandicus), this protein is Dihydroxy-acid dehydratase.